A 305-amino-acid chain; its full sequence is GTPase Era (305 aa).

The 169-residue stretch at 13 to 181 (RCGFVAIVGR…ESAVGRFLPE (169 aa)) folds into the Era-type G domain. Residues 21–28 (GRPNVGKS) form a G1 region. GTP is bound at residue 21-28 (GRPNVGKS). Residues 47 to 51 (QTTRH) are G2. The interval 68–71 (DTPG) is G3. Residues 68-72 (DTPGM) and 130-133 (NKVD) contribute to the GTP site. Residues 130–133 (NKVD) form a G4 region. The G5 stretch occupies residues 160 to 162 (LSA). The 85-residue stretch at 204-288 (VREKITRQLG…MLRLWVKVKR (85 aa)) folds into the KH type-2 domain.

The protein belongs to the TRAFAC class TrmE-Era-EngA-EngB-Septin-like GTPase superfamily. Era GTPase family. As to quaternary structure, monomer.

It localises to the cytoplasm. The protein resides in the cell inner membrane. An essential GTPase that binds both GDP and GTP, with rapid nucleotide exchange. Plays a role in 16S rRNA processing and 30S ribosomal subunit biogenesis and possibly also in cell cycle regulation and energy metabolism. In Marinobacter nauticus (strain ATCC 700491 / DSM 11845 / VT8) (Marinobacter aquaeolei), this protein is GTPase Era.